The chain runs to 344 residues: UDP-3-O-acylglucosamine N-acyltransferase (344 aa).

Histidine 248 functions as the Proton acceptor in the catalytic mechanism.

Belongs to the transferase hexapeptide repeat family. LpxD subfamily. Homotrimer.

The enzyme catalyses a UDP-3-O-[(3R)-3-hydroxyacyl]-alpha-D-glucosamine + a (3R)-hydroxyacyl-[ACP] = a UDP-2-N,3-O-bis[(3R)-3-hydroxyacyl]-alpha-D-glucosamine + holo-[ACP] + H(+). Its pathway is bacterial outer membrane biogenesis; LPS lipid A biosynthesis. Catalyzes the N-acylation of UDP-3-O-acylglucosamine using 3-hydroxyacyl-ACP as the acyl donor. Is involved in the biosynthesis of lipid A, a phosphorylated glycolipid that anchors the lipopolysaccharide to the outer membrane of the cell. The chain is UDP-3-O-acylglucosamine N-acyltransferase from Prochlorococcus marinus (strain MIT 9515).